Consider the following 426-residue polypeptide: Inhibin beta A chain (426 aa).

The first 20 residues, 1–20 (MPLLWLRGFLLASCWIIVRS), serve as a signal peptide directing secretion. Positions 21–310 (SPTPGSEGHS…EDHPHRRRRR (290 aa)) are excised as a propeptide. An N-linked (GlcNAc...) asparagine glycan is attached at N165. The interval 259–288 (KKKKKEEEGEGKKKGGGEGGAGADEEKEQS) is disordered. Residues 263-274 (KEEEGEGKKKGG) show a composition bias toward basic and acidic residues. Cystine bridges form between C314–C322, C321–C391, C350–C423, and C354–C425.

It belongs to the TGF-beta family. As to quaternary structure, dimeric, linked by one or more disulfide bonds. Inhibin A is a dimer of alpha/INHA and beta-A/INHBA. Activin A is a homodimer of beta-A/INHBA. Activin AB is a dimer of beta-A/INHBA and beta-B/INHBB. Interacts with FST and FSTL3; these interactions prevent activin A interaction to its type II receptor. Activin A interacts with ACVR2A. Activin A interacts with BMPR2. Inhibin A interacts with ACVR1; this interaction creates a non-signaling complex (NSC) that inhibits ACVR1-mediated BMP signaling. Inhibin A interacts with ACVR2A.

The protein resides in the secreted. Inhibins/activins are involved in regulating a number of diverse functions such as hypothalamic and pituitary hormone secretion, gonadal hormone secretion, germ cell development and maturation, erythroid differentiation, insulin secretion, nerve cell survival, embryonic axial development or bone growth, depending on their subunit composition. Functionally, activin A is a homodimer of INHBA that plays a role in several essential biological processes including embryonic development, stem cell maintenance and differentiation, haematopoiesis, cell proliferation and tissue fibrosis. Signals through type I (such as ACVR1B or ACVR1C) and type II receptors (such as ACVR2A, ACVR2B or BMPR2) which, upon ligand binding, phosphorylate SMAD2 and SMAD3 intracellular signaling mediators that form a complex with SMAD4, translocate to the nucleus and modulate gene expression. Can also activate alternative non-canonical intracellular signaling pathways including the p38 MAPK, extracellular signal-regulated kinases 1/2 (ERK1/2) and c-Jun N-terminal kinases (JNKs) to modulate cell migration and differentiation. Alternatively, promotes osteoblastic differentiation via ACVRL1-SMAD1/5/9 pathway. In addition, can engage the type I receptor ACVR1 to form an ACVR1-activin A-type II receptor non-signaling complex (NSC) that renders receptors unavailable for engagement with BMPs, hence resulting in an apparent inhibition of ACVR1-mediated BMP signaling. In terms of biological role, inhibin A is a dimer of alpha/INHA and beta-A/INHBA that functions as a feedback regulator in the hypothalamic-pituitary-gonadal (HPG) axis. Inhibits the secretion of FSH from the anterior pituitary gland by acting on pituitary gonadotrope cells. Antagonizes activin A by binding to the proteoglycan, betaglycan, and forming a stable complex with and, thereby, sequestering type II activin receptors while excluding type I receptor. The chain is Inhibin beta A chain (INHBA) from Homo sapiens (Human).